The primary structure comprises 468 residues: Argininosuccinate lyase (468 aa).

This sequence belongs to the lyase 1 family. Argininosuccinate lyase subfamily.

Its subcellular location is the cytoplasm. The enzyme catalyses 2-(N(omega)-L-arginino)succinate = fumarate + L-arginine. The protein operates within amino-acid biosynthesis; L-arginine biosynthesis; L-arginine from L-ornithine and carbamoyl phosphate: step 3/3. This Cutibacterium acnes (strain DSM 16379 / KPA171202) (Propionibacterium acnes) protein is Argininosuccinate lyase.